We begin with the raw amino-acid sequence, 235 residues long: 2-C-methyl-D-erythritol 4-phosphate cytidylyltransferase (235 aa).

The protein belongs to the IspD/TarI cytidylyltransferase family. IspD subfamily.

It carries out the reaction 2-C-methyl-D-erythritol 4-phosphate + CTP + H(+) = 4-CDP-2-C-methyl-D-erythritol + diphosphate. The protein operates within isoprenoid biosynthesis; isopentenyl diphosphate biosynthesis via DXP pathway; isopentenyl diphosphate from 1-deoxy-D-xylulose 5-phosphate: step 2/6. In terms of biological role, catalyzes the formation of 4-diphosphocytidyl-2-C-methyl-D-erythritol from CTP and 2-C-methyl-D-erythritol 4-phosphate (MEP). This Mycolicibacterium paratuberculosis (strain ATCC BAA-968 / K-10) (Mycobacterium paratuberculosis) protein is 2-C-methyl-D-erythritol 4-phosphate cytidylyltransferase.